Consider the following 307-residue polypeptide: Coproporphyrin III ferrochelatase (307 aa).

Fe-coproporphyrin III-binding positions include tyrosine 12, arginine 29, 45-46 (RY), serine 53, and tyrosine 124. Histidine 181 and glutamate 263 together coordinate Fe(2+).

The protein belongs to the ferrochelatase family.

Its subcellular location is the cytoplasm. It catalyses the reaction Fe-coproporphyrin III + 2 H(+) = coproporphyrin III + Fe(2+). The protein operates within porphyrin-containing compound metabolism; protoheme biosynthesis. Involved in coproporphyrin-dependent heme b biosynthesis. Catalyzes the insertion of ferrous iron into coproporphyrin III to form Fe-coproporphyrin III. The protein is Coproporphyrin III ferrochelatase of Staphylococcus saprophyticus subsp. saprophyticus (strain ATCC 15305 / DSM 20229 / NCIMB 8711 / NCTC 7292 / S-41).